Here is a 389-residue protein sequence, read N- to C-terminus: METLDGFAREKLDALEAQALRRRLVETDRREGAIAFREGRRLVSFCCNDYLNLSQHPDVKRAAVEATGKYGTGSGASRLVSGNHPLFGELERRLADWKQTEDCVVFGSGYMANMGIIPSLVREGDLIIADELSHACLLSGSKLSGARVAIFRHNDIAHLEELLGAHRGGAKHCLILTDGIFSMDGDAAPVEALAALAAQHDAWLMTDDAHGIGVVGHEGRGSSFMGERKAAVPLQMGTLSKAVGGYGGYLCASAPVVDLIRTRARTLIYSTGLPPAAVAASIAALDFIRGNPDYCKRPVEKARSFTRALGLADPVSPIVPLILGDAEVTLAASALLEAEGYLVTGIRPPTVPEGTARLRFTFTAEHDDADIARLATLVRERIIQRRAAE.

A substrate-binding site is contributed by Arg-22. 109–110 (GY) serves as a coordination point for pyridoxal 5'-phosphate. Substrate is bound at residue His-134. Pyridoxal 5'-phosphate contacts are provided by residues Ser-182, 207–210 (DDAH), and 238–241 (TLSK). N6-(pyridoxal phosphate)lysine is present on Lys-241. Thr-350 serves as a coordination point for substrate.

It belongs to the class-II pyridoxal-phosphate-dependent aminotransferase family. BioF subfamily. Homodimer. Pyridoxal 5'-phosphate is required as a cofactor.

The enzyme catalyses 6-carboxyhexanoyl-[ACP] + L-alanine + H(+) = (8S)-8-amino-7-oxononanoate + holo-[ACP] + CO2. Its pathway is cofactor biosynthesis; biotin biosynthesis. In terms of biological role, catalyzes the decarboxylative condensation of pimeloyl-[acyl-carrier protein] and L-alanine to produce 8-amino-7-oxononanoate (AON), [acyl-carrier protein], and carbon dioxide. The protein is Putative 8-amino-7-oxononanoate synthase (bioF) of Parvibaculum lavamentivorans (strain DS-1 / DSM 13023 / NCIMB 13966).